The chain runs to 243 residues: Biosynthetic peptidoglycan transglycosylase (243 aa).

Residues 22-42 form a helical membrane-spanning segment; it reads LIVLLVLALMSVLQVIVFRFV.

This sequence belongs to the glycosyltransferase 51 family.

The protein resides in the cell inner membrane. The catalysed reaction is [GlcNAc-(1-&gt;4)-Mur2Ac(oyl-L-Ala-gamma-D-Glu-L-Lys-D-Ala-D-Ala)](n)-di-trans,octa-cis-undecaprenyl diphosphate + beta-D-GlcNAc-(1-&gt;4)-Mur2Ac(oyl-L-Ala-gamma-D-Glu-L-Lys-D-Ala-D-Ala)-di-trans,octa-cis-undecaprenyl diphosphate = [GlcNAc-(1-&gt;4)-Mur2Ac(oyl-L-Ala-gamma-D-Glu-L-Lys-D-Ala-D-Ala)](n+1)-di-trans,octa-cis-undecaprenyl diphosphate + di-trans,octa-cis-undecaprenyl diphosphate + H(+). The protein operates within cell wall biogenesis; peptidoglycan biosynthesis. In terms of biological role, peptidoglycan polymerase that catalyzes glycan chain elongation from lipid-linked precursors. The sequence is that of Biosynthetic peptidoglycan transglycosylase from Xylella fastidiosa (strain 9a5c).